The chain runs to 1068 residues: Carbamoyl phosphate synthase large chain (1068 aa).

The carboxyphosphate synthetic domain stretch occupies residues 1–403 (MPKRTDINTI…SLQKALRGLE (403 aa)). 12 residues coordinate ATP: arginine 129, arginine 169, glycine 175, glycine 176, glutamine 208, valine 210, glutamate 215, glycine 241, valine 242, histidine 243, glutamine 285, and glutamate 299. One can recognise an ATP-grasp 1 domain in the interval 133 to 328 (KEAMEKIGLS…IAKVAAKLAV (196 aa)). Residues glutamine 285, glutamate 299, and asparagine 301 each coordinate Mg(2+). Glutamine 285, glutamate 299, and asparagine 301 together coordinate Mn(2+). The tract at residues 404 to 548 (TGICGFNLMS…YSTYEEECES (145 aa)) is oligomerization domain. The tract at residues 549-930 (RPSDKKKIMI…AFLKAQLGAN (382 aa)) is carbamoyl phosphate synthetic domain. In terms of domain architecture, ATP-grasp 2 spans 673–864 (QQILHKLHLK…LAKIAARVMA (192 aa)). Residues arginine 709, histidine 748, leucine 750, glutamate 755, glycine 780, isoleucine 781, histidine 782, serine 783, glutamine 823, and glutamate 835 each contribute to the ATP site. Mg(2+) contacts are provided by glutamine 823, glutamate 835, and asparagine 837. Residues glutamine 823, glutamate 835, and asparagine 837 each contribute to the Mn(2+) site. The 138-residue stretch at 931-1068 (ERIPKTGKVF…SLQDLHQRLL (138 aa)) folds into the MGS-like domain. The allosteric domain stretch occupies residues 931–1068 (ERIPKTGKVF…SLQDLHQRLL (138 aa)).

Belongs to the CarB family. Composed of two chains; the small (or glutamine) chain promotes the hydrolysis of glutamine to ammonia, which is used by the large (or ammonia) chain to synthesize carbamoyl phosphate. Tetramer of heterodimers (alpha,beta)4. Mg(2+) serves as cofactor. The cofactor is Mn(2+).

It carries out the reaction hydrogencarbonate + L-glutamine + 2 ATP + H2O = carbamoyl phosphate + L-glutamate + 2 ADP + phosphate + 2 H(+). The enzyme catalyses hydrogencarbonate + NH4(+) + 2 ATP = carbamoyl phosphate + 2 ADP + phosphate + 2 H(+). Its pathway is amino-acid biosynthesis; L-arginine biosynthesis; carbamoyl phosphate from bicarbonate: step 1/1. The protein operates within pyrimidine metabolism; UMP biosynthesis via de novo pathway; (S)-dihydroorotate from bicarbonate: step 1/3. Its function is as follows. Large subunit of the glutamine-dependent carbamoyl phosphate synthetase (CPSase). CPSase catalyzes the formation of carbamoyl phosphate from the ammonia moiety of glutamine, carbonate, and phosphate donated by ATP, constituting the first step of 2 biosynthetic pathways, one leading to arginine and/or urea and the other to pyrimidine nucleotides. The large subunit (synthetase) binds the substrates ammonia (free or transferred from glutamine from the small subunit), hydrogencarbonate and ATP and carries out an ATP-coupled ligase reaction, activating hydrogencarbonate by forming carboxy phosphate which reacts with ammonia to form carbamoyl phosphate. The protein is Carbamoyl phosphate synthase large chain of Pasteurella multocida (strain Pm70).